The primary structure comprises 173 residues: Crossover junction endodeoxyribonuclease RuvC (173 aa).

Catalysis depends on residues Asp-8, Glu-67, and Asp-139. Mg(2+) is bound by residues Asp-8, Glu-67, and Asp-139.

The protein belongs to the RuvC family. In terms of assembly, homodimer which binds Holliday junction (HJ) DNA. The HJ becomes 2-fold symmetrical on binding to RuvC with unstacked arms; it has a different conformation from HJ DNA in complex with RuvA. In the full resolvosome a probable DNA-RuvA(4)-RuvB(12)-RuvC(2) complex forms which resolves the HJ. The cofactor is Mg(2+).

It localises to the cytoplasm. The enzyme catalyses Endonucleolytic cleavage at a junction such as a reciprocal single-stranded crossover between two homologous DNA duplexes (Holliday junction).. Its function is as follows. The RuvA-RuvB-RuvC complex processes Holliday junction (HJ) DNA during genetic recombination and DNA repair. Endonuclease that resolves HJ intermediates. Cleaves cruciform DNA by making single-stranded nicks across the HJ at symmetrical positions within the homologous arms, yielding a 5'-phosphate and a 3'-hydroxyl group; requires a central core of homology in the junction. The consensus cleavage sequence is 5'-(A/T)TT(C/G)-3'. Cleavage occurs on the 3'-side of the TT dinucleotide at the point of strand exchange. HJ branch migration catalyzed by RuvA-RuvB allows RuvC to scan DNA until it finds its consensus sequence, where it cleaves and resolves the cruciform DNA. The sequence is that of Crossover junction endodeoxyribonuclease RuvC from Shewanella sp. (strain ANA-3).